A 282-amino-acid chain; its full sequence is Acetyl-coenzyme A carboxylase carboxyl transferase subunit beta (282 aa).

A CoA carboxyltransferase N-terminal domain is found at glycine 26–histidine 282.

The protein belongs to the AccD/PCCB family. In terms of assembly, acetyl-CoA carboxylase is a heterohexamer composed of biotin carboxyl carrier protein (AccB), biotin carboxylase (AccC) and two subunits each of ACCase subunit alpha (AccA) and ACCase subunit beta (AccD).

It localises to the cytoplasm. It catalyses the reaction N(6)-carboxybiotinyl-L-lysyl-[protein] + acetyl-CoA = N(6)-biotinyl-L-lysyl-[protein] + malonyl-CoA. It functions in the pathway lipid metabolism; malonyl-CoA biosynthesis; malonyl-CoA from acetyl-CoA: step 1/1. Functionally, component of the acetyl coenzyme A carboxylase (ACC) complex. Biotin carboxylase (BC) catalyzes the carboxylation of biotin on its carrier protein (BCCP) and then the CO(2) group is transferred by the transcarboxylase to acetyl-CoA to form malonyl-CoA. This is Acetyl-coenzyme A carboxylase carboxyl transferase subunit beta from Flavobacteriaceae bacterium (strain 3519-10).